Consider the following 138-residue polypeptide: Salivary protein 15 Iper-3 (138 aa).

The first 21 residues, 1–21 (MESFVAMKVVCITVLFVIVAV), serve as a signal peptide directing secretion. Residues Asn-30, Asn-42, Asn-68, Asn-107, and Asn-127 are each glycosylated (N-linked (GlcNAc...) asparagine). The interval 119–138 (GPNGQKCANKSQCVGHIPGC) is CD4-binding.

The protein belongs to the salp15 family. Interacts with host CD4. Interacts with host DC-SIGN (CD209). Interacts with Borrelia outer surface protein C (OspC). In terms of tissue distribution, expressed in salivary glands.

The protein localises to the secreted. Salivary tick protein that downregulates host immune system by binding to both dendritic cells, and CD4(+) T cells. Specifically binds to the CD4 coreceptor on T cells. This interaction prevents the activation of the Src kinase, Lck, and its downstream substrate Zap-70, and results in deficient activation of PLCgamma1, the repression of calcium fluxes triggered by T-cell antigen receptor (TCR) ligation, and a subsequent reduction in interleukin-2 production. This salivary protein also binds to DC-SIGN (CD209) on dendritic cells (DC) and activates the Raf-1 kinase/MEK signaling pathway that results in down-regulating expression of pro-inflammatory cytokines. Furthermore, it inhibits T cell proliferation induced by DCs. It also inhibits in vitro keratinocyte inflammation induced by Borrelia burgdorferi or by the major outer surface protein (OspC) of Borrelia. In addition, it downregulates chemokines and monocyte chemoattractant protein 1, as well as several antimicrobial peptides such as defensins, cathelicidin, psoriasin, and RNase 7. Apart from its immunomodulatory activities, it is also associated with protection of Borrelia spirochetes from antibody-mediated killing through its binding to OspC. In vivo, tests on different immune disease animal models show promising therapeutic results, e.g., in inhibiting HIV infection, experimental autoimmune encephalomyelitis, transplantation rejection, and asthma. The protein is Salivary protein 15 Iper-3 of Ixodes persulcatus (Taiga tick).